Reading from the N-terminus, the 497-residue chain is Lysine--tRNA ligase (497 aa).

Residues E406 and E413 each contribute to the Mg(2+) site.

It belongs to the class-II aminoacyl-tRNA synthetase family. As to quaternary structure, homodimer. It depends on Mg(2+) as a cofactor.

Its subcellular location is the cytoplasm. It catalyses the reaction tRNA(Lys) + L-lysine + ATP = L-lysyl-tRNA(Lys) + AMP + diphosphate. This is Lysine--tRNA ligase from Rhizobium leguminosarum bv. trifolii (strain WSM2304).